The primary structure comprises 406 residues: UPF0761 membrane protein NMB0524 (406 aa).

6 consecutive transmembrane segments (helical) span residues 43–63 (LLAL…FPVF), 100–120 (LTAI…RTID), 139–159 (FLVY…GISF), 176–196 (WSGA…LWGL), 210–230 (AFVG…LFTW), and 248–268 (VPFF…GAVL).

This sequence belongs to the UPF0761 family.

It localises to the cell inner membrane. The sequence is that of UPF0761 membrane protein NMB0524 from Neisseria meningitidis serogroup B (strain ATCC BAA-335 / MC58).